A 322-amino-acid polypeptide reads, in one-letter code: Nodulation protein Z (322 aa).

Positions 1 to 314 constitute a GT23 domain; it reads MYNRYVLSRR…NDPSRLVVIE (314 aa).

Belongs to the glycosyltransferase 23 family.

Functionally, fucosyltransferase which adds the fucose moiety of the nod factor on its terminal reducing N-acetylglucosamine end. Uses GDP-fucose as the donor group. This is Nodulation protein Z (nodZ) from Sinorhizobium fredii (strain NBRC 101917 / NGR234).